The sequence spans 726 residues: Catalase-peroxidase (726 aa).

The segment at 1–25 is disordered; the sequence is MDAKTDDSAGKCPFTGGGRRGHRNR. The tryptophyl-tyrosyl-methioninium (Trp-Tyr) (with M-244) cross-link spans 96–218; sequence WHSAGTYRIT…LAAVQMGLIY (123 aa). Histidine 97 serves as the catalytic Proton acceptor. A cross-link (tryptophyl-tyrosyl-methioninium (Tyr-Met) (with W-96)) is located at residues 218 to 244; it reads YVNPEGPNGNPDPVAAAKDIRETFYRM. Histidine 259 lines the heme b pocket.

Belongs to the peroxidase family. Peroxidase/catalase subfamily. As to quaternary structure, homodimer or homotetramer. Heme b is required as a cofactor. Post-translationally, formation of the three residue Trp-Tyr-Met cross-link is important for the catalase, but not the peroxidase activity of the enzyme.

It catalyses the reaction H2O2 + AH2 = A + 2 H2O. The catalysed reaction is 2 H2O2 = O2 + 2 H2O. Its function is as follows. Bifunctional enzyme with both catalase and broad-spectrum peroxidase activity. This is Catalase-peroxidase from Chelativorans sp. (strain BNC1).